A 264-amino-acid polypeptide reads, in one-letter code: Thymidylate synthase (264 aa).

Position 21 (Arg21) interacts with dUMP. His51 is a binding site for (6R)-5,10-methylene-5,6,7,8-tetrahydrofolate. 126-127 (RR) is a binding site for dUMP. The Nucleophile role is filled by Cys146. Residues 166 to 169 (RSAD), Asn177, and 207 to 209 (HLY) each bind dUMP. (6R)-5,10-methylene-5,6,7,8-tetrahydrofolate is bound at residue Asp169. Ala263 lines the (6R)-5,10-methylene-5,6,7,8-tetrahydrofolate pocket.

It belongs to the thymidylate synthase family. Bacterial-type ThyA subfamily. As to quaternary structure, homodimer.

It localises to the cytoplasm. It catalyses the reaction dUMP + (6R)-5,10-methylene-5,6,7,8-tetrahydrofolate = 7,8-dihydrofolate + dTMP. It participates in pyrimidine metabolism; dTTP biosynthesis. Its function is as follows. Catalyzes the reductive methylation of 2'-deoxyuridine-5'-monophosphate (dUMP) to 2'-deoxythymidine-5'-monophosphate (dTMP) while utilizing 5,10-methylenetetrahydrofolate (mTHF) as the methyl donor and reductant in the reaction, yielding dihydrofolate (DHF) as a by-product. This enzymatic reaction provides an intracellular de novo source of dTMP, an essential precursor for DNA biosynthesis. This chain is Thymidylate synthase, found in Cupriavidus necator (strain ATCC 17699 / DSM 428 / KCTC 22496 / NCIMB 10442 / H16 / Stanier 337) (Ralstonia eutropha).